Here is a 258-residue protein sequence, read N- to C-terminus: Ubiquinone/menaquinone biosynthesis C-methyltransferase UbiE (258 aa).

S-adenosyl-L-methionine contacts are provided by residues Thr81, Asp102, and 130–131 (NA).

This sequence belongs to the class I-like SAM-binding methyltransferase superfamily. MenG/UbiE family.

The catalysed reaction is a 2-demethylmenaquinol + S-adenosyl-L-methionine = a menaquinol + S-adenosyl-L-homocysteine + H(+). The enzyme catalyses a 2-methoxy-6-(all-trans-polyprenyl)benzene-1,4-diol + S-adenosyl-L-methionine = a 5-methoxy-2-methyl-3-(all-trans-polyprenyl)benzene-1,4-diol + S-adenosyl-L-homocysteine + H(+). The protein operates within quinol/quinone metabolism; menaquinone biosynthesis; menaquinol from 1,4-dihydroxy-2-naphthoate: step 2/2. Its pathway is cofactor biosynthesis; ubiquinone biosynthesis. In terms of biological role, methyltransferase required for the conversion of demethylmenaquinol (DMKH2) to menaquinol (MKH2) and the conversion of 2-polyprenyl-6-methoxy-1,4-benzoquinol (DDMQH2) to 2-polyprenyl-3-methyl-6-methoxy-1,4-benzoquinol (DMQH2). This chain is Ubiquinone/menaquinone biosynthesis C-methyltransferase UbiE, found in Sinorhizobium fredii (strain NBRC 101917 / NGR234).